Here is a 249-residue protein sequence, read N- to C-terminus: Small ribosomal subunit protein eS6 (249 aa).

Disordered regions lie at residues Pro161 to Thr181 and Leu194 to Lys249. Over residues Arg216–Ala229 the composition is skewed to basic and acidic residues. Residues Ser235, Ser236, Ser240, Ser244, and Ser247 each carry the phosphoserine modification. The segment covering Ser236–Lys249 has biased composition (low complexity).

The protein belongs to the eukaryotic ribosomal protein eS6 family. As to quaternary structure, component of the small ribosomal subunit. Part of the small subunit (SSU) processome, composed of more than 70 proteins and the RNA chaperone small nucleolar RNA (snoRNA) U3. Ribosomal protein S6 is the major substrate of protein kinases in eukaryote ribosomes. The phosphorylation is stimulated by growth factors, tumor promoting agents, and mitogens. It is dephosphorylated at growth arrest.

The protein resides in the cytoplasm. Its subcellular location is the nucleus. It localises to the nucleolus. Component of the 40S small ribosomal subunit. Plays an important role in controlling cell growth and proliferation through the selective translation of particular classes of mRNA. Part of the small subunit (SSU) processome, first precursor of the small eukaryotic ribosomal subunit. During the assembly of the SSU processome in the nucleolus, many ribosome biogenesis factors, an RNA chaperone and ribosomal proteins associate with the nascent pre-rRNA and work in concert to generate RNA folding, modifications, rearrangements and cleavage as well as targeted degradation of pre-ribosomal RNA by the RNA exosome. This is Small ribosomal subunit protein eS6 (rps6) from Xenopus laevis (African clawed frog).